Reading from the N-terminus, the 393-residue chain is Cysteine desulfurase (393 aa).

Pyridoxal 5'-phosphate-binding positions include 76–77, Asn155, Gln183, and 203–205; these read GT and SAH. Lys206 bears the N6-(pyridoxal phosphate)lysine mark. Thr241 contributes to the pyridoxal 5'-phosphate binding site. Catalysis depends on Cys328, which acts as the Cysteine persulfide intermediate. Cys328 contacts [2Fe-2S] cluster.

Belongs to the class-V pyridoxal-phosphate-dependent aminotransferase family. NifS/IscS subfamily. Homodimer. It depends on pyridoxal 5'-phosphate as a cofactor.

It carries out the reaction (sulfur carrier)-H + L-cysteine = (sulfur carrier)-SH + L-alanine. Catalyzes the removal of elemental sulfur atoms from cysteine to produce alanine. Seems to participate in the biosynthesis of the nitrogenase metalloclusters by providing the inorganic sulfur required for the Fe-S core formation. This Bradyrhizobium diazoefficiens (strain JCM 10833 / BCRC 13528 / IAM 13628 / NBRC 14792 / USDA 110) protein is Cysteine desulfurase.